The sequence spans 508 residues: Light-independent protochlorophyllide reductase subunit B (508 aa).

A [4Fe-4S] cluster-binding site is contributed by Asp-36. The Proton donor role is filled by Asp-282. 417-418 (GL) lines the substrate pocket.

Belongs to the ChlB/BchB/BchZ family. As to quaternary structure, protochlorophyllide reductase is composed of three subunits; BchL, BchN and BchB. Forms a heterotetramer of two BchB and two BchN subunits. It depends on [4Fe-4S] cluster as a cofactor.

It catalyses the reaction chlorophyllide a + oxidized 2[4Fe-4S]-[ferredoxin] + 2 ADP + 2 phosphate = protochlorophyllide a + reduced 2[4Fe-4S]-[ferredoxin] + 2 ATP + 2 H2O. The protein operates within porphyrin-containing compound metabolism; bacteriochlorophyll biosynthesis (light-independent). In terms of biological role, component of the dark-operative protochlorophyllide reductase (DPOR) that uses Mg-ATP and reduced ferredoxin to reduce ring D of protochlorophyllide (Pchlide) to form chlorophyllide a (Chlide). This reaction is light-independent. The NB-protein (BchN-BchB) is the catalytic component of the complex. This chain is Light-independent protochlorophyllide reductase subunit B, found in Methylocella silvestris (strain DSM 15510 / CIP 108128 / LMG 27833 / NCIMB 13906 / BL2).